We begin with the raw amino-acid sequence, 420 residues long: Gamma-glutamyl phosphate reductase (420 aa).

The protein belongs to the gamma-glutamyl phosphate reductase family.

It localises to the cytoplasm. It catalyses the reaction L-glutamate 5-semialdehyde + phosphate + NADP(+) = L-glutamyl 5-phosphate + NADPH + H(+). It functions in the pathway amino-acid biosynthesis; L-proline biosynthesis; L-glutamate 5-semialdehyde from L-glutamate: step 2/2. Catalyzes the NADPH-dependent reduction of L-glutamate 5-phosphate into L-glutamate 5-semialdehyde and phosphate. The product spontaneously undergoes cyclization to form 1-pyrroline-5-carboxylate. The sequence is that of Gamma-glutamyl phosphate reductase from Chlorobaculum parvum (strain DSM 263 / NCIMB 8327) (Chlorobium vibrioforme subsp. thiosulfatophilum).